Consider the following 72-residue polypeptide: Translation initiation factor IF-1 (72 aa).

An S1-like domain is found at 1–72; it reads MAREDHIEME…SKGRIVYRAR (72 aa).

This sequence belongs to the IF-1 family. In terms of assembly, component of the 30S ribosomal translation pre-initiation complex which assembles on the 30S ribosome in the order IF-2 and IF-3, IF-1 and N-formylmethionyl-tRNA(fMet); mRNA recruitment can occur at any time during PIC assembly.

It is found in the cytoplasm. One of the essential components for the initiation of protein synthesis. Stabilizes the binding of IF-2 and IF-3 on the 30S subunit to which N-formylmethionyl-tRNA(fMet) subsequently binds. Helps modulate mRNA selection, yielding the 30S pre-initiation complex (PIC). Upon addition of the 50S ribosomal subunit IF-1, IF-2 and IF-3 are released leaving the mature 70S translation initiation complex. This is Translation initiation factor IF-1 from Chromohalobacter salexigens (strain ATCC BAA-138 / DSM 3043 / CIP 106854 / NCIMB 13768 / 1H11).